Consider the following 449-residue polypeptide: UDP-N-acetylmuramoylalanine--D-glutamate ligase (449 aa).

118 to 124 (GTNGKTT) contributes to the ATP binding site.

This sequence belongs to the MurCDEF family.

The protein localises to the cytoplasm. The enzyme catalyses UDP-N-acetyl-alpha-D-muramoyl-L-alanine + D-glutamate + ATP = UDP-N-acetyl-alpha-D-muramoyl-L-alanyl-D-glutamate + ADP + phosphate + H(+). It functions in the pathway cell wall biogenesis; peptidoglycan biosynthesis. Functionally, cell wall formation. Catalyzes the addition of glutamate to the nucleotide precursor UDP-N-acetylmuramoyl-L-alanine (UMA). The sequence is that of UDP-N-acetylmuramoylalanine--D-glutamate ligase from Staphylococcus haemolyticus (strain JCSC1435).